The chain runs to 105 residues: Defensin-like protein 106 (105 aa).

Residues 1-24 form the signal peptide; sequence MANTPKTLIAFVFSVIVIISYVHC. Intrachain disulfides connect Cys-57–Cys-94, Cys-63–Cys-87, Cys-73–Cys-92, and Cys-77–Cys-93.

The protein belongs to the DEFL family.

It is found in the secreted. This Arabidopsis thaliana (Mouse-ear cress) protein is Defensin-like protein 106.